The primary structure comprises 942 residues: MSEYKDTLNLPETGFPMRGNLANREPEMLERWYKEDLYGEIRKAKKGKKSFVLHDGPPYANGDIHIGHALNKILKDIIIKSKTLSGFDAPYIPGWDCHGLPIELMVEKKVGKPGQKVTAAEFREKCREYAAGQVEGQKESFKRLGIMGEWDKPYRTMDFATEANIIRALGKIASNGHLLKGFKPVHWCTDCGSALAEAEVEYKDKVSPSIDVRFKTADEAALLSKFELTEGHEGKGDVSIVIWTTTPWTLPANRAVCLRDDLEYVLIQVEGDNPERIIVAAELAKDVMDRAGIEHFHNLGFAKGADLELSQFQHPFYDFTVPAILGDHVTTDSGTGVVHTAPGHGQEDFAVGQKYNLEVANPVGSNGVYLPDTELFAGQHVFKANDAVVETLKEKGALLHHHAYEHSYPHCWRHKTPIIFRATPQWFVSMDQAGLRAKALESIKGVQWMPEWGQSRIEGMIEGRPEWCISRQRTWGVPIALFVHKETAELHPNTLELIEKVAKLVEEKGIQAWWDVDAAELLGDEAEQYEKVLDTLDVWFDSGVTHFSVVDAREEYNGNSADLYLEGSDQHRGWFQSSLISSIAMKGVAPYKQVLTHGFVVDGHGRKMSKSIGNVVAPKDVTNKLGADILRLWVASTDYTGEVAVSDEILKRSADAYRRIRNTARFFLANLNGFNPATDIVPAEEMVALDRWAVGRALAAQEEIIKAYDEYNIHAVTQRLMQFCSIEMGSFYLDVIKDRQYTAKQGGHAQRSCQTALYYIVEALVRWMAPIMSFTADEIWNEMPGEREKFVFTGEWFDGLFGLAEGEELNNEFWTEIQKVRGAVNKLLEAARAEKTIGGALQAELTLFADDALAAKINKLEDELRFVLLTSAAAVKPLSEKSDAAQATDIEGLFVEVKATEAEKCDRCWHHTPDVGTIAGHEKICGRCVSNVDGKGEVRKFA.

A 'HIGH' region motif is present at residues 58–68 (PYANGDIHIGH). An L-isoleucyl-5'-AMP-binding site is contributed by E566. The short motif at 607–611 (KMSKS) is the 'KMSKS' region element. ATP is bound at residue K610. Zn(2+)-binding residues include C905, C908, C925, and C928.

It belongs to the class-I aminoacyl-tRNA synthetase family. IleS type 1 subfamily. Monomer. Requires Zn(2+) as cofactor.

It is found in the cytoplasm. The catalysed reaction is tRNA(Ile) + L-isoleucine + ATP = L-isoleucyl-tRNA(Ile) + AMP + diphosphate. Its function is as follows. Catalyzes the attachment of isoleucine to tRNA(Ile). As IleRS can inadvertently accommodate and process structurally similar amino acids such as valine, to avoid such errors it has two additional distinct tRNA(Ile)-dependent editing activities. One activity is designated as 'pretransfer' editing and involves the hydrolysis of activated Val-AMP. The other activity is designated 'posttransfer' editing and involves deacylation of mischarged Val-tRNA(Ile). This Vibrio parahaemolyticus serotype O3:K6 (strain RIMD 2210633) protein is Isoleucine--tRNA ligase.